A 999-amino-acid chain; its full sequence is Sarcoplasmic/endoplasmic reticulum calcium ATPase 3 (999 aa).

At 1 to 48 (MEAAHSVPVQDVLSRFGVAESCGLSPEQVRRNREKYGPNELPAEERKS) the chain is on the cytoplasmic side. Residues 49-69 (LWELVLEQFEDLLVRILLMAA) traverse the membrane as a helical segment. At 70 to 89 (FLSFILAWFEEGEESTTAFV) the chain is on the lumenal side. The helical transmembrane segment at 90-110 (EPIVIIMILIANAVVGVWQER) threads the bilayer. The Cytoplasmic segment spans residues 111 to 253 (NAESAIEALK…PEKTPLQQKL (143 aa)). Residues 254 to 273 (DEFSQQLSKVIFLVCIAVWV) traverse the membrane as a helical segment. Over 274–295 (INISHFSDPVHGGSWFRGAIYY) the chain is Lumenal. A helical membrane pass occupies residues 296–313 (FKTSVALAVAAIPEGLPA). V304, A305, I307, and E309 together coordinate Ca(2+). The Cytoplasmic portion of the chain corresponds to 314-757 (VITTCLALGT…EEGRAIYNNM (444 aa)). D351 functions as the 4-aspartylphosphate intermediate in the catalytic mechanism. The Mg(2+) site is built by D351 and T353. Position 353 (T353) interacts with ATP. An interaction with phospholamban 1 region spans residues 370–400 (EKVEGTQCSLHEFSITGSTYAPEGQILKDEK). Residues E442, R489, K515, R560, T625, G626, D627, R678, and K684 each contribute to the ATP site. Position 703 (D703) interacts with Mg(2+). N706 lines the ATP pocket. Residues 758–777 (KQFIRYLISSNVGEVVCIFL) traverse the membrane as a helical segment. Ca(2+)-binding residues include N768 and E771. Residues 778-787 (TAILGLPEAL) are Lumenal-facing. A helical membrane pass occupies residues 788–808 (IPVQLLWVNLVTDGLPATALG). An interaction with phospholamban 2 region spans residues 788-808 (IPVQLLWVNLVTDGLPATALG). N796, T799, and D800 together coordinate Ca(2+). Residues 809–828 (FNPPDLDIMDKLPRNPKEPL) lie on the Cytoplasmic side of the membrane. Residues 829–851 (ISGWLFFRYLAIGVYVGLATVGA) form a helical membrane-spanning segment. Over 852–897 (ATWWFLYDAEGPQVSFHQLRNFMRCTEDNPIFEGVNCEIFESRYPT) the chain is Lumenal. A helical membrane pass occupies residues 898 to 917 (TMALSVLVTIEMCNALNSVS). E908 contributes to the Ca(2+) binding site. The Cytoplasmic segment spans residues 918–930 (ENQSLLRMPPWLN). A helical membrane pass occupies residues 931–949 (IWLLGAIVMSMALHFFILY). At 950–964 (VKPMPLIFQVTPLSW) the chain is on the lumenal side. A helical transmembrane segment spans residues 965-985 (PQWVVVLKISLPVILLDEGLK). Topologically, residues 986-999 (YLSRNHLEGEEDKK) are cytoplasmic.

The protein belongs to the cation transport ATPase (P-type) (TC 3.A.3) family. Type IIA subfamily. Interacts with sarcolipin (SLN). Interacts with phospholamban (PLN). Interacts with myoregulin (MRLN). Interacts with DWORF. The cofactor is Mg(2+). In terms of tissue distribution, found in spleen, lung, intestine and brain.

The protein localises to the endoplasmic reticulum membrane. It is found in the sarcoplasmic reticulum membrane. It catalyses the reaction Ca(2+)(in) + ATP + H2O = Ca(2+)(out) + ADP + phosphate + H(+). Inhibited by sarcolipin (SLN), phospholamban (PLN) and myoregulin (MRLN). Enhanced by DWORF; DWORF increases activity by displacing sarcolipin (SLN), phospholamban (PLN) and myoregulin (MRLN). In terms of biological role, this magnesium-dependent enzyme catalyzes the hydrolysis of ATP coupled with the transport of calcium. Transports calcium ions from the cytosol into the sarcoplasmic/endoplasmic reticulum lumen. Contributes to calcium sequestration involved in muscular excitation/contraction. The sequence is that of Sarcoplasmic/endoplasmic reticulum calcium ATPase 3 (ATP2A3) from Gallus gallus (Chicken).